We begin with the raw amino-acid sequence, 503 residues long: 2-phosphoxylose phosphatase 1 (503 aa).

The Cytoplasmic segment spans residues M1 to R6. A helical; Signal-anchor for type II membrane protein transmembrane segment spans residues F7–L27. At H28–L503 the chain is on the lumenal side. The interval Q38–R63 is disordered. Residue N73 is glycosylated (N-linked (GlcNAc...) asparagine). Catalysis depends on H98, which acts as the Nucleophile. An N-linked (GlcNAc...) asparagine glycan is attached at N365. The active-site Proton donor is D396. N490 is a glycosylation site (N-linked (GlcNAc...) asparagine).

It belongs to the histidine acid phosphatase family.

It is found in the golgi apparatus membrane. It catalyses the reaction 3-O-[beta-D-GlcA-(1-&gt;3)-beta-D-Gal-(1-&gt;3)-beta-D-Gal-(1-&gt;4)-beta-D-2-O-P-Xyl]-L-seryl-[protein] + H2O = 3-O-(beta-D-GlcA-(1-&gt;3)-beta-D-Gal-(1-&gt;3)-beta-D-Gal-(1-&gt;4)-beta-D-Xyl)-L-seryl-[protein] + phosphate. Functionally, responsible for the 2-O-dephosphorylation of xylose in the glycosaminoglycan-protein linkage region of proteoglycans thereby regulating the amount of mature glycosaminoglycan (GAG) chains. Sulfated glycosaminoglycans (GAGs), including heparan sulfate and chondroitin sulfate, are synthesized on the so-called common GAG-protein linkage region (GlcUAbeta1-3Galbeta1-3Galbeta1-4Xylbeta1-O-Ser) of core proteins, which is formed by the stepwise addition of monosaccharide residues by the respective specific glycosyltransferases. This Danio rerio (Zebrafish) protein is 2-phosphoxylose phosphatase 1.